Consider the following 70-residue polypeptide: UPF0270 protein VP2791 (70 aa).

Belongs to the UPF0270 family.

This chain is UPF0270 protein VP2791, found in Vibrio parahaemolyticus serotype O3:K6 (strain RIMD 2210633).